Here is a 409-residue protein sequence, read N- to C-terminus: Elongation factor Tu (409 aa).

Positions 10–214 (KPHVNIGTIG…AVDDNIPEPE (205 aa)) constitute a tr-type G domain. The segment at 19–26 (GHVDHGKT) is G1. Position 19 to 26 (19 to 26 (GHVDHGKT)) interacts with GTP. Residue Thr-26 coordinates Mg(2+). The G2 stretch occupies residues 60–64 (GITIN). Positions 81 to 84 (DCPG) are G3. Residues 81-85 (DCPGH) and 136-139 (NKKD) contribute to the GTP site. The interval 136 to 139 (NKKD) is G4. Residues 174–176 (SAL) are G5.

The protein belongs to the TRAFAC class translation factor GTPase superfamily. Classic translation factor GTPase family. EF-Tu/EF-1A subfamily. Monomer.

It is found in the cytoplasm. It carries out the reaction GTP + H2O = GDP + phosphate + H(+). In terms of biological role, GTP hydrolase that promotes the GTP-dependent binding of aminoacyl-tRNA to the A-site of ribosomes during protein biosynthesis. In Crocosphaera subtropica (strain ATCC 51142 / BH68) (Cyanothece sp. (strain ATCC 51142)), this protein is Elongation factor Tu.